Reading from the N-terminus, the 172-residue chain is MLLLPPRPPHPRSSSPEAMDPPPPKAPPFPKAEGPSSTPSSAAGPRPPRLGRHLLIDANGVPYTYTVQLEEEPRGPPQREAPPGEPGPRKGYSCPECARVFASPLRLQSHRVSHSDLKPFTCGACGKAFKRSSHLSRHRATHRARAGPPHTCPLCPRRFQDAAELAQHVRLH.

The tract at residues Met1–Ser93 is disordered. Pro residues predominate over residues Met19–Pro30. A Glycyl lysine isopeptide (Lys-Gly) (interchain with G-Cter in SUMO2) cross-link involves residue Lys31. Residues Lys31–Gly44 are compositionally biased toward low complexity. Residues Gly75–Pro86 show a composition bias toward pro residues. The C2H2-type 1 zinc-finger motif lies at Tyr92–His114. A Glycyl lysine isopeptide (Lys-Gly) (interchain with G-Cter in SUMO2) cross-link involves residue Lys118. 2 C2H2-type zinc fingers span residues Phe120–His142 and His150–His172.

Interacts with SMAD2. In terms of tissue distribution, expressed in endothelial cells.

The protein localises to the nucleus. Involved in the regulation of endothelial cell proliferation and migration. Mediates H(2)O(2)-induced leukocyte chemotaxis by elevating interleukin-8 production and may play a role in inflammation. May be involved in transcriptional regulation. This Homo sapiens (Human) protein is Zinc finger protein 580 (ZNF580).